Consider the following 272-residue polypeptide: Phosphoglycolate phosphatase (272 aa).

Catalysis depends on Asp-19, which acts as the Nucleophile. The Mg(2+) site is built by Asp-19, Asp-21, and Asp-182.

It belongs to the HAD-like hydrolase superfamily. CbbY/CbbZ/Gph/YieH family. Requires Mg(2+) as cofactor.

The catalysed reaction is 2-phosphoglycolate + H2O = glycolate + phosphate. It functions in the pathway organic acid metabolism; glycolate biosynthesis; glycolate from 2-phosphoglycolate: step 1/1. Specifically catalyzes the dephosphorylation of 2-phosphoglycolate. Is involved in the dissimilation of the intracellular 2-phosphoglycolate formed during the DNA repair of 3'-phosphoglycolate ends, a major class of DNA lesions induced by oxidative stress. The protein is Phosphoglycolate phosphatase of Pseudomonas putida (strain ATCC 47054 / DSM 6125 / CFBP 8728 / NCIMB 11950 / KT2440).